Here is a 127-residue protein sequence, read N- to C-terminus: Mating pheromone 4 (127 aa).

The first 16 residues, 1-16 (MKAIFIILAILMVTQA), serve as a signal peptide directing secretion. A propeptide spanning residues 17–42 (FKMTSKVKSMNMSRNMSKNTSTLGTK) is cleaved from the precursor.

The protein localises to the secreted. Its function is as follows. Mating ciliate pheromones (or gamones) are diffusible extracellular communication signals that distinguish different intraspecific classes of cells commonly referred to as 'mating types'. They prepare the latter for conjugation by changing their cell surface properties. This chain is Mating pheromone 4 (PHR4), found in Euplotoides octocarinatus (Freshwater ciliate).